The primary structure comprises 337 residues: AP2/ERF and B3 domain-containing transcription factor At1g50680 (337 aa).

The AP2/ERF DNA-binding region spans 27–84 (KYKGVVQQQNGHWGAQIYADHKRIWLGTFKSADEAATAYDSASIKLRSFDANSHRNFP). The segment at residues 157-271 (FQKELTPSDV…VKTLEGQRKN (115 aa)) is a DNA-binding region (TF-B3).

Belongs to the AP2/ERF transcription factor family. RAV subfamily.

The protein resides in the nucleus. Functionally, probably acts as a transcriptional activator. Binds to the GCC-box pathogenesis-related promoter element. May be involved in the regulation of gene expression by stress factors and by components of stress signal transduction pathways. The chain is AP2/ERF and B3 domain-containing transcription factor At1g50680 from Arabidopsis thaliana (Mouse-ear cress).